We begin with the raw amino-acid sequence, 661 residues long: Acetyl-coenzyme A synthetase (661 aa).

CoA contacts are provided by residues 199–202 (RGGK) and Thr-317. ATP-binding positions include 393–395 (GEP), 417–422 (DTFWQT), Asp-508, and Arg-523. Ser-531 contacts CoA. Arg-534 lines the ATP pocket. Arg-596 contacts CoA.

Belongs to the ATP-dependent AMP-binding enzyme family.

The enzyme catalyses acetate + ATP + CoA = acetyl-CoA + AMP + diphosphate. This Coprinopsis cinerea (Inky cap fungus) protein is Acetyl-coenzyme A synthetase (ACS-1).